The chain runs to 387 residues: 4-hydroxy-3-methylbut-2-en-1-yl diphosphate synthase (flavodoxin) (387 aa).

[4Fe-4S] cluster-binding residues include cysteine 280, cysteine 283, cysteine 315, and glutamate 322.

Belongs to the IspG family. It depends on [4Fe-4S] cluster as a cofactor.

The catalysed reaction is (2E)-4-hydroxy-3-methylbut-2-enyl diphosphate + oxidized [flavodoxin] + H2O + 2 H(+) = 2-C-methyl-D-erythritol 2,4-cyclic diphosphate + reduced [flavodoxin]. The protein operates within isoprenoid biosynthesis; isopentenyl diphosphate biosynthesis via DXP pathway; isopentenyl diphosphate from 1-deoxy-D-xylulose 5-phosphate: step 5/6. Converts 2C-methyl-D-erythritol 2,4-cyclodiphosphate (ME-2,4cPP) into 1-hydroxy-2-methyl-2-(E)-butenyl 4-diphosphate. The chain is 4-hydroxy-3-methylbut-2-en-1-yl diphosphate synthase (flavodoxin) from Mycobacterium bovis (strain ATCC BAA-935 / AF2122/97).